The chain runs to 304 residues: Protoheme IX farnesyltransferase 2 (304 aa).

9 helical membrane passes run 28 to 48 (VVAL…VVDF), 50 to 70 (WLQA…AAAF), 98 to 118 (ISVA…LYAL), 122 to 142 (LTAW…TMYL), 150 to 170 (IVIA…AVTG), 176 to 196 (AWLL…AIAI), 223 to 243 (ILLY…VGMV), 245 to 265 (SVYL…AWKL), and 282 to 302 (IYHL…GLFF).

This sequence belongs to the UbiA prenyltransferase family. Protoheme IX farnesyltransferase subfamily.

Its subcellular location is the cell inner membrane. It catalyses the reaction heme b + (2E,6E)-farnesyl diphosphate + H2O = Fe(II)-heme o + diphosphate. Its pathway is porphyrin-containing compound metabolism; heme O biosynthesis; heme O from protoheme: step 1/1. In terms of biological role, converts heme B (protoheme IX) to heme O by substitution of the vinyl group on carbon 2 of heme B porphyrin ring with a hydroxyethyl farnesyl side group. This Vibrio campbellii (strain ATCC BAA-1116) protein is Protoheme IX farnesyltransferase 2.